A 116-amino-acid polypeptide reads, in one-letter code: UPF0102 protein LBJ_1427 (116 aa).

Belongs to the UPF0102 family.

This is UPF0102 protein LBJ_1427 from Leptospira borgpetersenii serovar Hardjo-bovis (strain JB197).